A 462-amino-acid chain; its full sequence is Trigger factor (462 aa).

The region spanning 163–259 is the PPIase FKBP-type domain; the sequence is TDYVNIDLQR…VNDVKRRDLP (97 aa). Residues 439–462 are disordered; sequence SREEFEEEMQQQQQQQAQRQRMAP. A compositionally biased stretch (low complexity) spans 448–462; sequence QQQQQQQAQRQRMAP.

This sequence belongs to the FKBP-type PPIase family. Tig subfamily.

The protein resides in the cytoplasm. The catalysed reaction is [protein]-peptidylproline (omega=180) = [protein]-peptidylproline (omega=0). Involved in protein export. Acts as a chaperone by maintaining the newly synthesized protein in an open conformation. Functions as a peptidyl-prolyl cis-trans isomerase. The protein is Trigger factor of Salinibacter ruber (strain DSM 13855 / M31).